Reading from the N-terminus, the 223-residue chain is Cytidylate kinase (223 aa).

12–20 (GPSGVGKGT) lines the ATP pocket.

Belongs to the cytidylate kinase family. Type 1 subfamily.

Its subcellular location is the cytoplasm. The enzyme catalyses CMP + ATP = CDP + ADP. The catalysed reaction is dCMP + ATP = dCDP + ADP. The protein is Cytidylate kinase of Xylella fastidiosa (strain 9a5c).